Here is a 103-residue protein sequence, read N- to C-terminus: Small ribosomal subunit protein uS10 (103 aa).

Belongs to the universal ribosomal protein uS10 family. In terms of assembly, part of the 30S ribosomal subunit.

In terms of biological role, involved in the binding of tRNA to the ribosomes. This Burkholderia mallei (strain NCTC 10247) protein is Small ribosomal subunit protein uS10.